Reading from the N-terminus, the 302-residue chain is MFSKKNLKWLSVLATVIMAFVQLGGALVTKTGSADGCGSDWPLCHGAFLPQNLPIQTLIELSHRAVSGLSLIVVLWLVIVAWKHIGYIKEVKPLSCISVGFLLIQALVGAAAVMWQQNAYVLALHFGISLISFSSVFVLTLIIYEVDRKYEADELFIRKPLRIYTWIMALIVYMTIYTGALVRHKEASLAYGQWPLPFNDLMPHNVQDWVNLTHRGMALIAFIWILITFIHAVNNYRENRTIRYGYTAAFILVILQVTTGALSIITEVNLFIALLHALFITLLFGLIAYFIILMLRTIRSGG.

Residues 1 to 8 are Cytoplasmic-facing; that stretch reads MFSKKNLK. A helical transmembrane segment spans residues 9–29; the sequence is WLSVLATVIMAFVQLGGALVT. The Extracellular portion of the chain corresponds to 30–67; sequence KTGSADGCGSDWPLCHGAFLPQNLPIQTLIELSHRAVS. Residues Cys-37 and Cys-44 are joined by a disulfide bond. Glu-60 is a catalytic residue. His-63 serves as a coordination point for heme o. The helical transmembrane segment at 68–88 threads the bilayer; that stretch reads GLSLIVVLWLVIVAWKHIGYI. Residues 89–93 lie on the Cytoplasmic side of the membrane; that stretch reads KEVKP. A helical membrane pass occupies residues 94–114; it reads LSCISVGFLLIQALVGAAAVM. The Extracellular segment spans residues 115 to 122; sequence WQQNAYVL. Residues 123-143 form a helical membrane-spanning segment; the sequence is ALHFGISLISFSSVFVLTLII. Position 125 (His-125) interacts with heme o. Over 144 to 161 the chain is Cytoplasmic; the sequence is YEVDRKYEADELFIRKPL. Residues 162 to 182 form a helical membrane-spanning segment; that stretch reads RIYTWIMALIVYMTIYTGALV. Over 183–215 the chain is Extracellular; that stretch reads RHKEASLAYGQWPLPFNDLMPHNVQDWVNLTHR. His-214 is a heme b binding site. Residues 216–236 form a helical membrane-spanning segment; it reads GMALIAFIWILITFIHAVNNY. Residues 237 to 244 lie on the Cytoplasmic side of the membrane; sequence RENRTIRY. A helical membrane pass occupies residues 245 to 265; sequence GYTAAFILVILQVTTGALSII. Residues 266–271 lie on the Extracellular side of the membrane; that stretch reads TEVNLF. The helical transmembrane segment at 272–292 threads the bilayer; that stretch reads IALLHALFITLLFGLIAYFII. Residue His-276 coordinates heme b. Over 293 to 302 the chain is Cytoplasmic; sequence LMLRTIRSGG.

Belongs to the COX15/CtaA family. Type 1 subfamily. As to quaternary structure, interacts with CtaB. The cofactor is heme b.

The protein resides in the cell membrane. It catalyses the reaction Fe(II)-heme o + 2 A + H2O = Fe(II)-heme a + 2 AH2. The protein operates within porphyrin-containing compound metabolism; heme A biosynthesis; heme A from heme O: step 1/1. Its function is as follows. Catalyzes the conversion of heme O to heme A by two successive hydroxylations of the methyl group at C8. The first hydroxylation forms heme I, the second hydroxylation results in an unstable dihydroxymethyl group, which spontaneously dehydrates, resulting in the formyl group of heme A. This chain is Heme A synthase, found in Staphylococcus saprophyticus subsp. saprophyticus (strain ATCC 15305 / DSM 20229 / NCIMB 8711 / NCTC 7292 / S-41).